A 391-amino-acid chain; its full sequence is 3-demethoxyubiquinol 3-hydroxylase (391 aa).

This sequence belongs to the UbiH/COQ6 family. Component of the Ubi complex metabolon, which regroups five ubiquinone biosynthesis proteins (UbiE, UbiF, UbiG, UbiH and UbiI) and two accessory factors (UbiK and the lipid-binding protein UbiJ). FAD is required as a cofactor.

It localises to the cytoplasm. The enzyme catalyses a 5-methoxy-2-methyl-3-(all-trans-polyprenyl)benzene-1,4-diol + AH2 + O2 = a 3-demethylubiquinol + A + H2O. Its pathway is cofactor biosynthesis; ubiquinone biosynthesis. Catalyzes the hydroxylation of 2-octaprenyl-3-methyl-6-methoxy-1,4-benzoquinol during ubiquinone biosynthesis. The sequence is that of 3-demethoxyubiquinol 3-hydroxylase (ubiF) from Escherichia coli (strain K12).